We begin with the raw amino-acid sequence, 168 residues long: 2-C-methyl-D-erythritol 2,4-cyclodiphosphate synthase (168 aa).

The a divalent metal cation site is built by D11 and H13. 4-CDP-2-C-methyl-D-erythritol 2-phosphate is bound by residues D11–H13 and H38–S39. Residue H46 coordinates a divalent metal cation. Residues D60 to G62, T133 to D136, F140, and R143 each bind 4-CDP-2-C-methyl-D-erythritol 2-phosphate.

The protein belongs to the IspF family. In terms of assembly, homotrimer. The cofactor is a divalent metal cation.

It carries out the reaction 4-CDP-2-C-methyl-D-erythritol 2-phosphate = 2-C-methyl-D-erythritol 2,4-cyclic diphosphate + CMP. Its pathway is isoprenoid biosynthesis; isopentenyl diphosphate biosynthesis via DXP pathway; isopentenyl diphosphate from 1-deoxy-D-xylulose 5-phosphate: step 4/6. In terms of biological role, involved in the biosynthesis of isopentenyl diphosphate (IPP) and dimethylallyl diphosphate (DMAPP), two major building blocks of isoprenoid compounds. Catalyzes the conversion of 4-diphosphocytidyl-2-C-methyl-D-erythritol 2-phosphate (CDP-ME2P) to 2-C-methyl-D-erythritol 2,4-cyclodiphosphate (ME-CPP) with a corresponding release of cytidine 5-monophosphate (CMP). The chain is 2-C-methyl-D-erythritol 2,4-cyclodiphosphate synthase from Cutibacterium acnes (strain DSM 16379 / KPA171202) (Propionibacterium acnes).